Reading from the N-terminus, the 348-residue chain is Protein RecA (348 aa).

Residue glycine 64–threonine 71 participates in ATP binding. Residues glutamate 324–leucine 335 show a composition bias toward basic and acidic residues. The interval glutamate 324 to glutamate 348 is disordered. Residues alanine 336–glutamate 348 show a composition bias toward acidic residues.

It belongs to the RecA family.

It localises to the cytoplasm. In terms of biological role, can catalyze the hydrolysis of ATP in the presence of single-stranded DNA, the ATP-dependent uptake of single-stranded DNA by duplex DNA, and the ATP-dependent hybridization of homologous single-stranded DNAs. It interacts with LexA causing its activation and leading to its autocatalytic cleavage. The polypeptide is Protein RecA (Listeria ivanovii).